A 197-amino-acid polypeptide reads, in one-letter code: MTFRLGLTGSIGMGKSTTAQMFVDEGCALWDADAAVHRLYSSGGAAVAPMRAAFPDAVVDDAVSRPVLKHIIAEDPQALKRIEAIVHPLVAEDRARFRDSATADILVFDIPLLFETGGEAAMDAVACVSIPPEEQKARVMARGTMTEAQFEQIRAKQMPNEEKCARSDFVIVTDTLDHARAQVQDIVRQIRAGNIHA.

A DPCK domain is found at 4-197 (RLGLTGSIGM…RQIRAGNIHA (194 aa)). Position 12–17 (12–17 (GMGKST)) interacts with ATP.

The protein belongs to the CoaE family.

It is found in the cytoplasm. The enzyme catalyses 3'-dephospho-CoA + ATP = ADP + CoA + H(+). It participates in cofactor biosynthesis; coenzyme A biosynthesis; CoA from (R)-pantothenate: step 5/5. Its function is as follows. Catalyzes the phosphorylation of the 3'-hydroxyl group of dephosphocoenzyme A to form coenzyme A. This is Dephospho-CoA kinase from Ruegeria pomeroyi (strain ATCC 700808 / DSM 15171 / DSS-3) (Silicibacter pomeroyi).